The following is a 474-amino-acid chain: MTSLPGRGVSPSSSDPLCEGNAAPSSSSSSGQDLKQLKNSILSCVFSSPFSIFEAHQDSSANRSLKPHSGSYAWSRFLRRIACTGSMWRFLGASKALTSSDVWFLGKCYKLSSEELSNSSDCESGNAAFLEDFSSRIWITYRKGFDAISDSKYTSDVNWGCMVRSSQMLVAQALIFHHLGRSWRKPSQKPYSPEYIGILHMFGDSEACAFSIHNLLQAGKSYGLAAGSWVGPYAMCRAWQTLVCTNREHHEAVDGNGNFPMALYVVSGDEDGERGGAPVVCIDVAAQLCCDFNKNQSTWSPILLLVPLVLGLDKLNPRYIPLLKETLTFPQSLGILGGKPGTSTYIAGVQDDRALYLDPHEVQLAVDIAADNLEAGTSSYHCSTVRDLALDLIDPSLAIGFYCRDKDDFDDFCSRASELVDKANGAPLFTVVQSVQPSKQMYNEESSSGDGMDSINVEGLDGSGETGEEEWQIL.

The interval methionine 1–glutamine 32 is disordered. Cysteine 161 serves as the catalytic Nucleophile. Catalysis depends on residues aspartate 358 and histidine 360. Positions lysine 439–glycine 449 are enriched in polar residues. The segment at lysine 439 to leucine 474 is disordered.

The protein belongs to the peptidase C54 family. As to quaternary structure, interacts with ATG8.

It localises to the cytoplasm. It catalyses the reaction [protein]-C-terminal L-amino acid-glycyl-phosphatidylethanolamide + H2O = [protein]-C-terminal L-amino acid-glycine + a 1,2-diacyl-sn-glycero-3-phosphoethanolamine. In terms of biological role, cysteine protease that plays a key role in autophagy by mediating both proteolytic activation and delipidation of ATG8 family proteins. The protease activity is required for proteolytic activation of ATG8 family proteins: cleaves the C-terminal amino acid of ATG8 proteins to reveal a C-terminal glycine. Exposure of the glycine at the C-terminus is essential for ATG8 proteins conjugation to phosphatidylethanolamine (PE) and insertion to membranes, which is necessary for autophagy. In addition to the protease activity, also mediates delipidation of PE-conjugated ATG8 proteins. In Oryza sativa subsp. japonica (Rice), this protein is Cysteine protease ATG4A (ATG4A).